The chain runs to 623 residues: Isocitrate dehydrogenase kinase/phosphatase (623 aa).

ATP is bound by residues Ala-344–Met-350 and Lys-365. Asp-400 is an active-site residue.

The protein belongs to the AceK family.

The protein localises to the cytoplasm. It catalyses the reaction L-seryl-[isocitrate dehydrogenase] + ATP = O-phospho-L-seryl-[isocitrate dehydrogenase] + ADP + H(+). Bifunctional enzyme which can phosphorylate or dephosphorylate isocitrate dehydrogenase (IDH) on a specific serine residue. This is a regulatory mechanism which enables bacteria to bypass the Krebs cycle via the glyoxylate shunt in response to the source of carbon. When bacteria are grown on glucose, IDH is fully active and unphosphorylated, but when grown on acetate or ethanol, the activity of IDH declines drastically concomitant with its phosphorylation. This is Isocitrate dehydrogenase kinase/phosphatase from Polaromonas naphthalenivorans (strain CJ2).